We begin with the raw amino-acid sequence, 37 residues long: Large ribosomal subunit protein bL36 (37 aa).

The protein belongs to the bacterial ribosomal protein bL36 family.

This chain is Large ribosomal subunit protein bL36, found in Persephonella marina (strain DSM 14350 / EX-H1).